Here is a 384-residue protein sequence, read N- to C-terminus: Thylakoid membrane protein TERC, chloroplastic (384 aa).

A chloroplast-targeting transit peptide spans Met-1 to Ser-48. Topologically, residues Leu-49–Thr-115 are stromal. The interval Gly-68–Leu-104 is disordered. Basic and acidic residues predominate over residues Lys-76 to Glu-88. Residues Ser-116 to Leu-136 form a helical membrane-spanning segment. At Lys-137 to Glu-145 the chain is on the lumenal, thylakoid side. Residues Phe-146–Leu-166 form a helical membrane-spanning segment. Residues Val-167–Lys-180 lie on the Stromal side of the membrane. A helical membrane pass occupies residues Val-181 to Thr-201. Over Ala-202 to Lys-206 the chain is Lumenal, thylakoid. A helical membrane pass occupies residues Phe-207–Ala-227. The Stromal segment spans residues Ser-228–Thr-275. Residues Val-276–Gly-296 traverse the membrane as a helical segment. Residues Val-297–Pro-301 lie on the Lumenal, thylakoid side of the membrane. The helical transmembrane segment at Phe-302 to Ile-322 threads the bilayer. The Stromal portion of the chain corresponds to Ser-323–Ser-335. Residues Ile-336–Ile-356 traverse the membrane as a helical segment. A topological domain (lumenal, thylakoid) is located at residue Ser-357. Residues Thr-358–Thr-378 traverse the membrane as a helical segment. Residues Asn-379–Ser-384 lie on the Stromal side of the membrane.

Interacts with ALB3. In terms of tissue distribution, expressed in roots, rosette and cauline leaves, stems and flowers.

It is found in the plastid. The protein resides in the chloroplast thylakoid membrane. Integral thylakoid membrane protein that plays a crucial role in thylakoid membrane biogenesis and thylakoid formation in early chloroplast development. Is essential for de novo synthesis of photosystem II (PSII) core proteins and required for efficient insertion of thylakoid membrane proteins, presumably via interaction with ALB3. May assist synthesis of thylakoid membrane proteins at the membrane insertion step. This Arabidopsis thaliana (Mouse-ear cress) protein is Thylakoid membrane protein TERC, chloroplastic.